Consider the following 430-residue polypeptide: Adenylosuccinate synthetase (430 aa).

GTP is bound by residues 12 to 18 and 40 to 42; these read GDEGKGK and GHT. Asp13 serves as the catalytic Proton acceptor. Mg(2+) is bound by residues Asp13 and Gly40. IMP contacts are provided by residues 13 to 16, 38 to 41, Thr130, Arg144, Gln224, Thr239, and Arg303; these read DEGK and NAGH. The active-site Proton donor is the His41. A substrate-binding site is contributed by 299-305; it reads TVTGRKR. GTP is bound by residues Arg305, 331-333, and 413-415; these read KLD and STS.

It belongs to the adenylosuccinate synthetase family. In terms of assembly, homodimer. It depends on Mg(2+) as a cofactor.

It is found in the cytoplasm. The enzyme catalyses IMP + L-aspartate + GTP = N(6)-(1,2-dicarboxyethyl)-AMP + GDP + phosphate + 2 H(+). It participates in purine metabolism; AMP biosynthesis via de novo pathway; AMP from IMP: step 1/2. In terms of biological role, plays an important role in the de novo pathway of purine nucleotide biosynthesis. Catalyzes the first committed step in the biosynthesis of AMP from IMP. This is Adenylosuccinate synthetase from Methylorubrum extorquens (strain CM4 / NCIMB 13688) (Methylobacterium extorquens).